Here is a 239-residue protein sequence, read N- to C-terminus: Xyloglucan-specific endo-beta-1,4-glucanase A (239 aa).

The N-terminal stretch at 1 to 14 is a signal peptide; it reads MKLLALSLASLASA. N172 carries an N-linked (GlcNAc...) asparagine glycan.

It belongs to the glycosyl hydrolase 12 (cellulase H) family.

The protein localises to the secreted. It carries out the reaction xyloglucan + H2O = xyloglucan oligosaccharides.. In terms of biological role, catalyzes endohydrolysis of 1,4-beta-D-glucosidic linkages in xyloglucan with retention of the beta-configuration of the glycosyl residues. Specific for xyloglucan and does not hydrolyze other cell wall components. Active against tamarind xyloglucan. In Emericella nidulans (strain FGSC A4 / ATCC 38163 / CBS 112.46 / NRRL 194 / M139) (Aspergillus nidulans), this protein is Xyloglucan-specific endo-beta-1,4-glucanase A (xgeA).